Reading from the N-terminus, the 205-residue chain is ATP-dependent Clp protease proteolytic subunit (205 aa).

The active-site Nucleophile is the Ser109. The active site involves His134.

Belongs to the peptidase S14 family. As to quaternary structure, fourteen ClpP subunits assemble into 2 heptameric rings which stack back to back to give a disk-like structure with a central cavity, resembling the structure of eukaryotic proteasomes.

It localises to the cytoplasm. The catalysed reaction is Hydrolysis of proteins to small peptides in the presence of ATP and magnesium. alpha-casein is the usual test substrate. In the absence of ATP, only oligopeptides shorter than five residues are hydrolyzed (such as succinyl-Leu-Tyr-|-NHMec, and Leu-Tyr-Leu-|-Tyr-Trp, in which cleavage of the -Tyr-|-Leu- and -Tyr-|-Trp bonds also occurs).. Cleaves peptides in various proteins in a process that requires ATP hydrolysis. Has a chymotrypsin-like activity. Plays a major role in the degradation of misfolded proteins. This chain is ATP-dependent Clp protease proteolytic subunit, found in Buchnera aphidicola subsp. Baizongia pistaciae (strain Bp).